A 323-amino-acid polypeptide reads, in one-letter code: Oligodendrocyte transcription factor 2 (323 aa).

Polar residues-rich tracts occupy residues 1 to 13 (MDSD…SRPS) and 27 to 45 (KGSS…STPS). The segment at 1–107 (MDSDASLVSS…KKQMTEPELQ (107 aa)) is disordered. Low complexity predominate over residues 76-93 (KSSSSSTSSSTSSAAASS). The bHLH domain occupies 108 to 162 (QLRLKINSRERKRMHDLNIAMDGLREVMPYAHGPSVRKLSKIATLLLARNYILML).

As to quaternary structure, interacts with NKX2-2. Interacts with ZNF488. As to expression, expressed in the brain, in oligodendrocytes. Strongly expressed in oligodendrogliomas, while expression is weak to moderate in astrocytomas. Expression in glioblastomas highly variable.

The protein localises to the nucleus. It localises to the cytoplasm. Required for oligodendrocyte and motor neuron specification in the spinal cord, as well as for the development of somatic motor neurons in the hindbrain. Functions together with ZNF488 to promote oligodendrocyte differentiation. Cooperates with OLIG1 to establish the pMN domain of the embryonic neural tube. Antagonist of V2 interneuron and of NKX2-2-induced V3 interneuron development. This chain is Oligodendrocyte transcription factor 2 (OLIG2), found in Homo sapiens (Human).